The sequence spans 442 residues: MELPQMPELMGLSLLVGLLALVATAAVARGWLRAEEKPSQPVCQKENEPKKSGSKKQKQNQRVRKEKPQQHSFTHPLLAAALKSHSGNISCMDFSSNGKYLATCADDRTVRIWSTKDFLQREHRSMRANVELDHATLVRFSPDCRAFIVWLANGDTLRVFKMTKREDGGFTFTATPEDFPKKHKAPIINIGIADTGKFIMTASSDTTVLIWNLKGQVLSTINTNQMNNSHAVISPCSRFVGSCGFTPDVKVWEVCFGKKGEFQEVLRAFELKGHSASVHSFAFSNDSRRMASVSKDGTWKLWDTDVEYKKQQDPYLLRTGRFEEASTMPCRLALSPDTHVLALATGTNIHLFNTRRGEKEEYFECVHGECIADLTFDITGRFLASCGDRAVRLFHNTPGHRAVVEEMQSLLKRASSESTRQRLQQQLTQAQEALKSLGALKK.

The interval 36–71 (EKPSQPVCQKENEPKKSGSKKQKQNQRVRKEKPQQH) is disordered. The segment covering 52–65 (SGSKKQKQNQRVRK) has biased composition (basic residues). 7 WD repeats span residues 84–123 (SHSGNISCMDFSSNGKYLATCADDRTVRIWSTKDFLQREH), 130–170 (VELD…DGGF), 182–222 (KHKA…STIN), 224–263 (NQMNNSHAVISPCSRFVGSCGFTPDVKVWEVCFGKKGEFQ), 273–312 (GHSASVHSFAFSNDSRRMASVSKDGTWKLWDTDVEYKKQQ), 323–362 (EEASTMPCRLALSPDTHVLALATGTNIHLFNTRRGEKEEY), and 366–404 (VHGECIADLTFDITGRFLASCGDRAVRLFHNTPGHRAVV). Residue Lys164 forms a Glycyl lysine isopeptide (Lys-Gly) (interchain with G-Cter in SUMO2) linkage. Thr428 carries the phosphothreonine modification.

This is Transducin beta-like protein 2 (Tbl2) from Mus musculus (Mouse).